We begin with the raw amino-acid sequence, 377 residues long: 3-dehydroquinate synthase (377 aa).

NAD(+) contacts are provided by residues 115–119, 139–140, K152, and K161; these read GVIGD and TS. Residues E194, H256, and H275 each contribute to the Zn(2+) site.

Belongs to the sugar phosphate cyclases superfamily. Dehydroquinate synthase family. It depends on NAD(+) as a cofactor. Co(2+) serves as cofactor. The cofactor is Zn(2+).

The protein localises to the cytoplasm. It carries out the reaction 7-phospho-2-dehydro-3-deoxy-D-arabino-heptonate = 3-dehydroquinate + phosphate. It participates in metabolic intermediate biosynthesis; chorismate biosynthesis; chorismate from D-erythrose 4-phosphate and phosphoenolpyruvate: step 2/7. Its function is as follows. Catalyzes the conversion of 3-deoxy-D-arabino-heptulosonate 7-phosphate (DAHP) to dehydroquinate (DHQ). The sequence is that of 3-dehydroquinate synthase from Agrobacterium fabrum (strain C58 / ATCC 33970) (Agrobacterium tumefaciens (strain C58)).